Here is a 159-residue protein sequence, read N- to C-terminus: Ribosomal RNA large subunit methyltransferase H (159 aa).

Leu76 and Gly108 together coordinate S-adenosyl-L-methionine.

The protein belongs to the RNA methyltransferase RlmH family. Homodimer.

It is found in the cytoplasm. The catalysed reaction is pseudouridine(1915) in 23S rRNA + S-adenosyl-L-methionine = N(3)-methylpseudouridine(1915) in 23S rRNA + S-adenosyl-L-homocysteine + H(+). Functionally, specifically methylates the pseudouridine at position 1915 (m3Psi1915) in 23S rRNA. This Pediococcus pentosaceus (strain ATCC 25745 / CCUG 21536 / LMG 10740 / 183-1w) protein is Ribosomal RNA large subunit methyltransferase H.